A 128-amino-acid chain; its full sequence is Adrenodoxin (128 aa).

Residue Ser-3 is modified to Phosphoserine. At Lys-6 the chain carries N6-acetyllysine; alternate. Position 6 is an N6-succinyllysine; alternate (Lys-6). In terms of domain architecture, 2Fe-2S ferredoxin-type spans Val-7 to Val-111. 4 residues coordinate [2Fe-2S] cluster: Cys-46, Cys-52, Cys-55, and Cys-92. Position 98 is an N6-succinyllysine (Lys-98). Ser-117 is modified (phosphoserine).

This sequence belongs to the adrenodoxin/putidaredoxin family. In terms of assembly, interacts with CYP11A1. [2Fe-2S] cluster serves as cofactor.

The protein localises to the mitochondrion matrix. Its function is as follows. Essential for the synthesis of various steroid hormones. Participates in the reduction of mitochondrial cytochrome P450 for steroidogenesis. Transfers electrons from adrenodoxin reductase to CYP11A1, a cytochrome P450 that catalyzes cholesterol side-chain cleavage. Does not form a ternary complex with adrenodoxin reductase and CYP11A1 but shuttles between the two enzymes to transfer electrons. This is Adrenodoxin (FDX1) from Ovis aries (Sheep).